The primary structure comprises 540 residues: Chaperonin GroEL (540 aa).

Residues Thr-29–Pro-32, Asp-86–Thr-90, Gly-413, Asn-476–Ala-478, and Asp-492 contribute to the ATP site.

Belongs to the chaperonin (HSP60) family. As to quaternary structure, forms a cylinder of 14 subunits composed of two heptameric rings stacked back-to-back. Interacts with the co-chaperonin GroES.

It is found in the cytoplasm. It carries out the reaction ATP + H2O + a folded polypeptide = ADP + phosphate + an unfolded polypeptide.. In terms of biological role, together with its co-chaperonin GroES, plays an essential role in assisting protein folding. The GroEL-GroES system forms a nano-cage that allows encapsulation of the non-native substrate proteins and provides a physical environment optimized to promote and accelerate protein folding. In Geobacillus thermodenitrificans (strain NG80-2), this protein is Chaperonin GroEL.